Consider the following 319-residue polypeptide: MSAVDAAAGAADGAHLAAGTVVGVVGPTAAGKSALSVALAHALDGEVVNADSMQLYRGLDIGTAKLTTDERAGVPHHLLDIWPVTEPASVAEYQRLARAAVDDILARGRVPLLVGGSGLYLRAVLERFEFPGTDPVLRQRLEAELAQAGPAALHERLRAVDPDAAANILPGNGRRIVRALEVVELTGAPFTAALPDPSPYYRSVQVGVDLDTARLDERIALRVDRMWADGLVAETRLLADQGLAEGRTASRALGYQQVLRFLAGELTESEAYQETIRATRRFVRRQRSWFRRDPRITWLDSAGSGLVAEALRVVRPAAR.

26-33 (GPTAAGKS) is a binding site for ATP. 28–33 (TAAGKS) lines the substrate pocket. The interaction with substrate tRNA stretch occupies residues 51–54 (DSMQ).

Belongs to the IPP transferase family. In terms of assembly, monomer. The cofactor is Mg(2+).

It catalyses the reaction adenosine(37) in tRNA + dimethylallyl diphosphate = N(6)-dimethylallyladenosine(37) in tRNA + diphosphate. Its function is as follows. Catalyzes the transfer of a dimethylallyl group onto the adenine at position 37 in tRNAs that read codons beginning with uridine, leading to the formation of N6-(dimethylallyl)adenosine (i(6)A). This chain is tRNA dimethylallyltransferase, found in Salinispora tropica (strain ATCC BAA-916 / DSM 44818 / JCM 13857 / NBRC 105044 / CNB-440).